Here is a 612-residue protein sequence, read N- to C-terminus: DNA mismatch repair protein MutL (612 aa).

Belongs to the DNA mismatch repair MutL/HexB family.

Its function is as follows. This protein is involved in the repair of mismatches in DNA. It is required for dam-dependent methyl-directed DNA mismatch repair. May act as a 'molecular matchmaker', a protein that promotes the formation of a stable complex between two or more DNA-binding proteins in an ATP-dependent manner without itself being part of a final effector complex. In Afipia carboxidovorans (strain ATCC 49405 / DSM 1227 / KCTC 32145 / OM5) (Oligotropha carboxidovorans), this protein is DNA mismatch repair protein MutL.